Reading from the N-terminus, the 834-residue chain is Phenylalanine--tRNA ligase beta subunit (834 aa).

Residues 48–159 (GDIERPLVVG…GTAEPGTDAN (112 aa)) enclose the tRNA-binding domain. Positions 411 to 492 (PAPEPIRMDI…RLEGLEQIPS (82 aa)) constitute a B5 domain. Mg(2+) is bound by residues Asp-470, Asp-476, Glu-479, and Glu-480. The FDX-ACB domain occupies 740 to 833 (SPFPAVLQDV…AADAVGAVLR (94 aa)).

The protein belongs to the phenylalanyl-tRNA synthetase beta subunit family. Type 1 subfamily. In terms of assembly, tetramer of two alpha and two beta subunits. It depends on Mg(2+) as a cofactor.

It localises to the cytoplasm. It carries out the reaction tRNA(Phe) + L-phenylalanine + ATP = L-phenylalanyl-tRNA(Phe) + AMP + diphosphate + H(+). The protein is Phenylalanine--tRNA ligase beta subunit of Nocardia farcinica (strain IFM 10152).